Consider the following 80-residue polypeptide: UPF0270 protein VFMJ11_0205 (80 aa).

It belongs to the UPF0270 family.

In Aliivibrio fischeri (strain MJ11) (Vibrio fischeri), this protein is UPF0270 protein VFMJ11_0205.